We begin with the raw amino-acid sequence, 419 residues long: GTPase Obg (419 aa).

An Obg domain is found at 1-156 (MRFVDYVSIE…FYLDLQLKVM (156 aa)). Positions 157–334 (ADIGLVGKPN…LGEKQKKLEI (178 aa)) constitute an OBG-type G domain. GTP contacts are provided by residues 163–170 (GKPNAGKS), 188–192 (FTTLA), 209–212 (DLPG), 278–281 (NKCD), and 315–317 (NII). 2 residues coordinate Mg(2+): serine 170 and threonine 190. An OCT domain is found at 342–419 (IEFNLKAPFL…RIYEFEFHWN (78 aa)).

Belongs to the TRAFAC class OBG-HflX-like GTPase superfamily. OBG GTPase family. In terms of assembly, monomer. It depends on Mg(2+) as a cofactor.

It localises to the cytoplasm. An essential GTPase which binds GTP, GDP and possibly (p)ppGpp with moderate affinity, with high nucleotide exchange rates and a fairly low GTP hydrolysis rate. Plays a role in control of the cell cycle, stress response, ribosome biogenesis and in those bacteria that undergo differentiation, in morphogenesis control. The sequence is that of GTPase Obg from Mesomycoplasma hyopneumoniae (strain J / ATCC 25934 / NCTC 10110) (Mycoplasma hyopneumoniae).